Consider the following 293-residue polypeptide: Cytochrome c biogenesis protein CcsA (293 aa).

8 consecutive transmembrane segments (helical) span residues 12–32, 39–59, 78–98, 99–119, 142–162, 216–236, 250–267, and 273–293; these read INIL…AKLT, VFSL…GMLL, LFLS…LSII, GAIG…ILPP, VMIF…IYVI, FISL…VWAN, TWAL…HIRI, and KIYA…VTWE.

The protein belongs to the CcmF/CycK/Ccl1/NrfE/CcsA family. May interact with Ccs1.

The protein resides in the plastid. The protein localises to the chloroplast thylakoid membrane. Required during biogenesis of c-type cytochromes (cytochrome c6 and cytochrome f) at the step of heme attachment. The polypeptide is Cytochrome c biogenesis protein CcsA (Cyanidium caldarium (Red alga)).